The sequence spans 433 residues: Ascus wall endo-1,3-alpha-glucanase (433 aa).

This sequence belongs to the glycosyl hydrolase 71 family.

The protein resides in the ascus epiplasm. It catalyses the reaction Endohydrolysis of (1-&gt;3)-alpha-D-glucosidic linkages in isolichenin, pseudonigeran and nigeran.. In terms of biological role, promotes the release of ascospores from asci by hydrolyzing 1,3-alpha-glucan in the ascus wall. This Schizosaccharomyces pombe (strain 972 / ATCC 24843) (Fission yeast) protein is Ascus wall endo-1,3-alpha-glucanase.